The following is a 240-amino-acid chain: Triosephosphate isomerase (240 aa).

8–10 (NWK) contacts substrate. The Electrophile role is filled by H93. E160 serves as the catalytic Proton acceptor. G166 lines the substrate pocket.

Belongs to the triosephosphate isomerase family. In terms of assembly, homodimer.

The protein localises to the cytoplasm. It carries out the reaction D-glyceraldehyde 3-phosphate = dihydroxyacetone phosphate. It participates in carbohydrate biosynthesis; gluconeogenesis. The protein operates within carbohydrate degradation; glycolysis; D-glyceraldehyde 3-phosphate from glycerone phosphate: step 1/1. Its function is as follows. Involved in the gluconeogenesis. Catalyzes stereospecifically the conversion of dihydroxyacetone phosphate (DHAP) to D-glyceraldehyde-3-phosphate (G3P). This is Triosephosphate isomerase from Ehrlichia chaffeensis (strain ATCC CRL-10679 / Arkansas).